Consider the following 142-residue polypeptide: Large ribosomal subunit protein uL13 (142 aa).

This sequence belongs to the universal ribosomal protein uL13 family. As to quaternary structure, part of the 50S ribosomal subunit.

Functionally, this protein is one of the early assembly proteins of the 50S ribosomal subunit, although it is not seen to bind rRNA by itself. It is important during the early stages of 50S assembly. The polypeptide is Large ribosomal subunit protein uL13 (Aliivibrio salmonicida (strain LFI1238) (Vibrio salmonicida (strain LFI1238))).